Reading from the N-terminus, the 151-residue chain is Large ribosomal subunit protein bL9 (151 aa).

It belongs to the bacterial ribosomal protein bL9 family.

In terms of biological role, binds to the 23S rRNA. The polypeptide is Large ribosomal subunit protein bL9 (Chlorobium luteolum (strain DSM 273 / BCRC 81028 / 2530) (Pelodictyon luteolum)).